The chain runs to 147 residues: Ribosome maturation factor RimP (147 aa).

This sequence belongs to the RimP family.

Its subcellular location is the cytoplasm. Its function is as follows. Required for maturation of 30S ribosomal subunits. This chain is Ribosome maturation factor RimP, found in Thermosipho melanesiensis (strain DSM 12029 / CIP 104789 / BI429).